The primary structure comprises 100 residues: Small ribosomal subunit protein uS14 (100 aa).

The protein belongs to the universal ribosomal protein uS14 family. As to quaternary structure, part of the 30S ribosomal subunit. Contacts proteins S3 and S10.

In terms of biological role, binds 16S rRNA, required for the assembly of 30S particles and may also be responsible for determining the conformation of the 16S rRNA at the A site. The sequence is that of Small ribosomal subunit protein uS14 from Synechococcus sp. (strain CC9311).